The chain runs to 649 residues: ENTH domain-containing protein C19F8.03c (649 aa).

In terms of domain architecture, ENTH spans 2-136; it reads SPSKWLLTYE…VDYAQVGDAP (135 aa). Disordered regions lie at residues 280–382, 409–440, and 590–649; these read YLQN…NELE, LSAEGTSASPSLDKKSESTNIVQPIPSHPNDS, and FTHG…PFRS. S285 and S287 each carry phosphoserine. The segment covering 299-308 has biased composition (basic residues); that stretch reads PTLRKKKSIP. Composition is skewed to polar residues over residues 313–326 and 340–349; these read ESSSTIQKENTVQQ and PETQRTTSRI. Acidic residues predominate over residues 352–381; the sequence is QEEEIKEEEMEGEEEEEEEEVPNYESENEL. Polar residues-rich tracts occupy residues 409-418, 614-624, and 635-649; these read LSAEGTSASP, TPYTASKNPFS, and ARNSISTESKNPFRS. T414 is subject to Phosphothreonine. Position 417 is a phosphoserine (S417).

It is found in the cytoplasm. This Schizosaccharomyces pombe (strain 972 / ATCC 24843) (Fission yeast) protein is ENTH domain-containing protein C19F8.03c.